The following is a 333-amino-acid chain: 5-formaminoimidazole-4-carboxamide-1-(beta)-D-ribofuranosyl 5'-monophosphate synthetase (333 aa).

2 residues coordinate 5-amino-1-(5-phospho-beta-D-ribosyl)imidazole-4-carboxamide: H20 and S85. One can recognise an ATP-grasp domain in the interval 106–313 (RELIKWEADQ…YFDRPMDMGE (208 aa)). Residues 136-187 (PEEV…VPAY) and E209 each bind ATP. N229 contributes to the 5-amino-1-(5-phospho-beta-D-ribosyl)imidazole-4-carboxamide binding site. The Mg(2+) site is built by E268 and E281.

The protein belongs to the phosphohexose mutase family. The cofactor is Mg(2+). It depends on Mn(2+) as a cofactor.

It catalyses the reaction 5-amino-1-(5-phospho-beta-D-ribosyl)imidazole-4-carboxamide + formate + ATP = 5-formamido-1-(5-phospho-D-ribosyl)imidazole-4-carboxamide + ADP + phosphate. It functions in the pathway purine metabolism; IMP biosynthesis via de novo pathway; 5-formamido-1-(5-phospho-D-ribosyl)imidazole-4-carboxamide from 5-amino-1-(5-phospho-D-ribosyl)imidazole-4-carboxamide (formate route): step 1/1. In terms of biological role, catalyzes the ATP- and formate-dependent formylation of 5-aminoimidazole-4-carboxamide-1-beta-d-ribofuranosyl 5'-monophosphate (AICAR) to 5-formaminoimidazole-4-carboxamide-1-beta-d-ribofuranosyl 5'-monophosphate (FAICAR) in the absence of folates. The chain is 5-formaminoimidazole-4-carboxamide-1-(beta)-D-ribofuranosyl 5'-monophosphate synthetase from Pyrobaculum islandicum (strain DSM 4184 / JCM 9189 / GEO3).